Consider the following 371-residue polypeptide: MGNKTALYDIHQSMGGKIVDFGGWDMPLHYGSQIDEHHKVRQHAGMFDVSHMTVVDVTGSDAKAYLQYLLANDVAKLDNLVGKALYSGMLNEQGGVIDDLIVYNMGDWYRVVVNCSTREKDLAWMSQVANNYQVKLQERADLAMIAVQGPQAIAITKTLVSAEAATLIDNLQVFQGLASTQQGSDWFFGRTGYTGEDGLEIMLPNEQAGTFWQALAAAGVAPCGLGARDTLRLEAGMNLYGHEMDENISPLAANMGWTIAWQPEARNFIGRAALTAEKSAGQRHKLVGLVLRERGVLRAEQLVHIANSDERGVITSGTFSPSLGYSIALARVPVTQVPLTPGAQCQVEMRGKLVTVDVVAPGFVRQGKALV.

The protein belongs to the GcvT family. The glycine cleavage system is composed of four proteins: P, T, L and H.

The catalysed reaction is N(6)-[(R)-S(8)-aminomethyldihydrolipoyl]-L-lysyl-[protein] + (6S)-5,6,7,8-tetrahydrofolate = N(6)-[(R)-dihydrolipoyl]-L-lysyl-[protein] + (6R)-5,10-methylene-5,6,7,8-tetrahydrofolate + NH4(+). The glycine cleavage system catalyzes the degradation of glycine. This Cellvibrio japonicus (strain Ueda107) (Pseudomonas fluorescens subsp. cellulosa) protein is Aminomethyltransferase.